A 270-amino-acid chain; its full sequence is Protein-ADP-ribose hydrolase (270 aa).

The region spanning 73–267 (VSVKDCQKTN…LYDTYLQKEN (195 aa)) is the Macro domain. Residues D92, I93, and N106 each coordinate ADP-D-ribose. Residues C112, H117, and C119 each contribute to the Zn(2+) site. ADP-D-ribose-binding residues include C119, I120, D121, S212, T213, G214, E215, and F216.

The protein belongs to the MacroD-type family. Zn-Macro subfamily. Zn(2+) is required as a cofactor.

It carries out the reaction 4-O-(ADP-D-ribosyl)-L-aspartyl-[protein] + H2O = L-aspartyl-[protein] + ADP-D-ribose + H(+). Functionally, ADP-ribosylhydrolase that specifically reverses the SirTM-mediated mono-ADP-ribosylation at an asparatate residue of GcvH-L, by releasing ADP-ribose from the target protein. May play a role in the regulation of the response to host-induced oxidative stress. The protein is Protein-ADP-ribose hydrolase of Streptococcus pyogenes serotype M6 (strain ATCC BAA-946 / MGAS10394).